The chain runs to 616 residues: MPKYRSATTTHGRNMAGARALWRATGMTDADFGKPIIAVVNSFTQFVPGHVHLRDLGKLVAEQIEAAGGVAKEFNTIAVDDGIAMGHGGMLYSLPSRELIADSVEYMVNAHCADAMVCISNCDKITPGMLMASLRLNIPVIFVSGGPMEAGKTKLSDQIIKLDLVDAMIQGADPKVSDSQSDQVERSACPTCGSCSGMFTANSMNCLTEALGLSQPGNGSLLATHADRKQLFLNAGKRIVELTKRYYEQNDESALPRNIASKAAFENAMTLDIAMGGSTNTVLHLLAAAQEAEIDFTMSDIDKLSRKVPQLCKVAPSTQKYHMEDVHRAGGVIGILGELDRAGLLNRDVKNVLGLTLPQTLEQYDVMLTQDDSVKNMFRAGPAGIRTTQAFSQDCRWDSLDDDRANGCIRSLEHAYSKDGGLAVLYGNFAENGCIVKTAGVDDSILKFTGPAKVYESQDDAVDAILGGKVVAGDVVIIRYEGPKGGPGMQEMLYPTSFLKSMGLGKACALITDGRFSGGTSGLSIGHVSPEAASGGSIGLIEDGDLIAIDIPNRGIQLQVSDAELAARREAQEARGDKAWTPKNRERQVSFALRAYASLATSADKGAVRDKSKLGG.

A Mg(2+)-binding site is contributed by Asp-81. Cys-122 lines the [2Fe-2S] cluster pocket. Residues Asp-123 and Lys-124 each coordinate Mg(2+). The residue at position 124 (Lys-124) is an N6-carboxylysine. Cys-195 provides a ligand contact to [2Fe-2S] cluster. Glu-491 is a Mg(2+) binding site. Residue Ser-517 is the Proton acceptor of the active site.

It belongs to the IlvD/Edd family. In terms of assembly, homodimer. [2Fe-2S] cluster is required as a cofactor. Mg(2+) serves as cofactor.

It catalyses the reaction (2R)-2,3-dihydroxy-3-methylbutanoate = 3-methyl-2-oxobutanoate + H2O. The catalysed reaction is (2R,3R)-2,3-dihydroxy-3-methylpentanoate = (S)-3-methyl-2-oxopentanoate + H2O. It functions in the pathway amino-acid biosynthesis; L-isoleucine biosynthesis; L-isoleucine from 2-oxobutanoate: step 3/4. The protein operates within amino-acid biosynthesis; L-valine biosynthesis; L-valine from pyruvate: step 3/4. Functions in the biosynthesis of branched-chain amino acids. Catalyzes the dehydration of (2R,3R)-2,3-dihydroxy-3-methylpentanoate (2,3-dihydroxy-3-methylvalerate) into 2-oxo-3-methylpentanoate (2-oxo-3-methylvalerate) and of (2R)-2,3-dihydroxy-3-methylbutanoate (2,3-dihydroxyisovalerate) into 2-oxo-3-methylbutanoate (2-oxoisovalerate), the penultimate precursor to L-isoleucine and L-valine, respectively. This chain is Dihydroxy-acid dehydratase, found in Escherichia coli O7:K1 (strain IAI39 / ExPEC).